An 806-amino-acid chain; its full sequence is Phenylalanine--tRNA ligase beta subunit (806 aa).

Residues 40–155 (NKGVKGVVVG…SDAEVGADAL (116 aa)) enclose the tRNA-binding domain. One can recognise a B5 domain in the interval 409 to 484 (VQERTVSVTA…RLYGYDHIPV (76 aa)). Mg(2+) is bound by residues Asp462, Asp468, Glu471, and Glu472. The region spanning 712-805 (PRFPSMTRDM…VEEKFGAELR (94 aa)) is the FDX-ACB domain.

The protein belongs to the phenylalanyl-tRNA synthetase beta subunit family. Type 1 subfamily. In terms of assembly, tetramer of two alpha and two beta subunits. Requires Mg(2+) as cofactor.

The protein resides in the cytoplasm. It carries out the reaction tRNA(Phe) + L-phenylalanine + ATP = L-phenylalanyl-tRNA(Phe) + AMP + diphosphate + H(+). The protein is Phenylalanine--tRNA ligase beta subunit of Bacillus cereus (strain ATCC 14579 / DSM 31 / CCUG 7414 / JCM 2152 / NBRC 15305 / NCIMB 9373 / NCTC 2599 / NRRL B-3711).